We begin with the raw amino-acid sequence, 236 residues long: Large ribosomal subunit protein uL3 (236 aa).

Belongs to the universal ribosomal protein uL3 family. As to quaternary structure, part of the 50S ribosomal subunit. Forms a cluster with proteins L14 and L19.

In terms of biological role, one of the primary rRNA binding proteins, it binds directly near the 3'-end of the 23S rRNA, where it nucleates assembly of the 50S subunit. The sequence is that of Large ribosomal subunit protein uL3 from Anaeromyxobacter dehalogenans (strain 2CP-C).